The sequence spans 506 residues: Methylthioalkylmalate synthase 2, chloroplastic (506 aa).

The transit peptide at 1-49 directs the protein to the chloroplast; sequence MASSLLTSSGMIPTTGSTVVGRSVLPFQSSLHSLRLTHSYKNPALFISC. The Pyruvate carboxyltransferase domain maps to 85–359; it reads VRVFDTTLRD…YTRIDTRQIM (275 aa).

Belongs to the alpha-IPM synthase/homocitrate synthase family.

It is found in the plastid. The protein localises to the chloroplast. It catalyses the reaction an omega-(methylsulfanyl)-2-oxoalkanoate + acetyl-CoA + H2O = a 2-(omega-methylsulfanyl)alkylmalate + CoA + H(+). Catalyzes only the first methionine chain elongation cycle. The protein is Methylthioalkylmalate synthase 2, chloroplastic (MAM2) of Arabidopsis thaliana (Mouse-ear cress).